Consider the following 349-residue polypeptide: Protein RecA (349 aa).

65–72 serves as a coordination point for ATP; the sequence is GPESSGKT.

It belongs to the RecA family.

It localises to the cytoplasm. Functionally, can catalyze the hydrolysis of ATP in the presence of single-stranded DNA, the ATP-dependent uptake of single-stranded DNA by duplex DNA, and the ATP-dependent hybridization of homologous single-stranded DNAs. It interacts with LexA causing its activation and leading to its autocatalytic cleavage. In Acinetobacter baumannii (strain AB307-0294), this protein is Protein RecA.